Reading from the N-terminus, the 632-residue chain is tRNA uridine 5-carboxymethylaminomethyl modification enzyme MnmG (632 aa).

13–18 (GGGHAG) provides a ligand contact to FAD. Residue 273 to 287 (GPRYCPSIEDKIHRF) participates in NAD(+) binding.

This sequence belongs to the MnmG family. As to quaternary structure, homodimer. Heterotetramer of two MnmE and two MnmG subunits. FAD serves as cofactor.

The protein localises to the cytoplasm. In terms of biological role, NAD-binding protein involved in the addition of a carboxymethylaminomethyl (cmnm) group at the wobble position (U34) of certain tRNAs, forming tRNA-cmnm(5)s(2)U34. This chain is tRNA uridine 5-carboxymethylaminomethyl modification enzyme MnmG, found in Psychrobacter cryohalolentis (strain ATCC BAA-1226 / DSM 17306 / VKM B-2378 / K5).